The primary structure comprises 661 residues: Acetyl-coenzyme A synthetase (661 aa).

CoA is bound by residues 197 to 200 (RGGK) and T320. ATP is bound by residues 396 to 398 (GEP), 420 to 425 (DTWWQT), D511, and R526. CoA is bound at residue S534. Residue R537 coordinates ATP. Mg(2+)-binding residues include V548 and V553. The residue at position 620 (K620) is an N6-acetyllysine.

The protein belongs to the ATP-dependent AMP-binding enzyme family. It depends on Mg(2+) as a cofactor. Acetylated. Deacetylation by the SIR2-homolog deacetylase activates the enzyme.

The enzyme catalyses acetate + ATP + CoA = acetyl-CoA + AMP + diphosphate. In terms of biological role, catalyzes the conversion of acetate into acetyl-CoA (AcCoA), an essential intermediate at the junction of anabolic and catabolic pathways. AcsA undergoes a two-step reaction. In the first half reaction, AcsA combines acetate with ATP to form acetyl-adenylate (AcAMP) intermediate. In the second half reaction, it can then transfer the acetyl group from AcAMP to the sulfhydryl group of CoA, forming the product AcCoA. The sequence is that of Acetyl-coenzyme A synthetase from Leptospira interrogans serogroup Icterohaemorrhagiae serovar Lai (strain 56601).